The sequence spans 373 residues: MKYAAALTAIAALAARAAAVGVSGTPVGFASSATGGGDATPVYPTTTDELVSYLGDDEARVIVLSKTFDFTDTEGTTTTTGCAPWGTASGCQLAINKDDWCTNYEPDAPTTTVTYNTAGELGITVNSNKSLIGEGTSGVIKGRGLRMVSGVSNIIIQNIAVTDINPEYVWGGDAITLDEADLVWIDHVTTARIGRQHYVLGTDADSRVSITNNYINGESDYSATCDGHHYWNVYLDGSSDKVTFSGNYLYKTSGRAPKVQDNTYLHIYNNYWENNSGHAFEIGSGGYVLAEGNYFSNVDTVLETDTFEGALFSSDSASSTCESYIGRSCVANVNGGDLTGTSTTVLSNLSGDTLPSADAASTSPASNAGQGNL.

The first 19 residues, 1–19 (MKYAAALTAIAALAARAAA), serve as a signal peptide directing secretion. Intrachain disulfides connect C82–C101 and C91–C225. A glycan (N-linked (GlcNAc...) asparagine) is linked at N128. R255 is an active-site residue. Residue N274 is glycosylated (N-linked (GlcNAc...) asparagine). Residues C321 and C329 are joined by a disulfide bond. The N-linked (GlcNAc...) asparagine glycan is linked to N348. Over residues 354–366 (LPSADAASTSPAS) the composition is skewed to low complexity. The segment at 354 to 373 (LPSADAASTSPASNAGQGNL) is disordered.

Belongs to the polysaccharide lyase 1 family. In terms of processing, may be O-glycosylated; does not contain N-acetylglucosamine.

It is found in the secreted. The enzyme catalyses Eliminative cleavage of (1-&gt;4)-alpha-D-galacturonan methyl ester to give oligosaccharides with 4-deoxy-6-O-methyl-alpha-D-galact-4-enuronosyl groups at their non-reducing ends.. Pectinolytic enzymes consist of four classes of enzymes: pectin lyase, polygalacturonase, pectin methylesterase and rhamnogalacturonase. Among pectinolytic enzymes, pectin lyase is the most important in depolymerization of pectin, since it cleaves internal glycosidic bonds of highly methylated pectins. This chain is Pectin lyase D (pelD), found in Aspergillus niger.